The primary structure comprises 252 residues: NADP-dependent (R)-specific alcohol dehydrogenase (252 aa).

NADP(+) is bound by residues 16–19 (TLGI), 39–40 (RH), 63–64 (DA), asparagine 90, tyrosine 156, lysine 160, and 191–195 (IKTPL). Tyrosine 156 acts as the Proton donor/acceptor in catalysis. Glutamine 252 contributes to the Mg(2+) binding site.

It belongs to the short-chain dehydrogenases/reductases (SDR) family. In terms of assembly, homotetramer. The cofactor is Mg(2+).

The catalysed reaction is a secondary alcohol + NADP(+) = a ketone + NADPH + H(+). The enzyme catalyses acetophenone + NADPH + H(+) = (R)-1-phenylethanol + NADP(+). It catalyses the reaction 2,5-hexanedione + 2 NADPH + 2 H(+) = (2R,5R)-hexanediol + 2 NADP(+). It carries out the reaction ethyl 3-oxobutanoate + NADPH + H(+) = ethyl (R)-3-hydroxybutanoate + NADP(+). The catalysed reaction is 2-octanone + NADPH + H(+) = (2R)-octan-2-ol + NADP(+). NADP-dependent (R)-specific alcohol dehydrogenase (ADH) with a broad substrate specificity, able to catalyze in vitro the stereoselective reduction of several aliphatic and aromatic ketones as well as beta-keto esters to the corresponding enantiomerically pure alcohols. The chain is NADP-dependent (R)-specific alcohol dehydrogenase from Lentilactobacillus kefiri (Lactobacillus kefiri).